The chain runs to 734 residues: Mechanosensitive ion channel protein 10 (734 aa).

Disordered regions lie at residues 1-75 (MAEQ…LTQR) and 115-136 (SFSR…APVT). Basic and acidic residues predominate over residues 24–39 (EASRRSKEMASPESEK). Position 34 is a phosphoserine (Ser-34). Polar residues-rich tracts occupy residues 65-75 (PNQNNVGLTQR) and 117-129 (SRAS…NRSV). 2 positions are modified to phosphoserine: Ser-128 and Ser-131. Transmembrane regions (helical) follow at residues 164-184 (ISTL…ALVA), 196-216 (FWGL…SGML), 249-269 (SVQV…LFNH), 288-308 (LISI…LKIL), 516-536 (LVTA…LEVA), and 551-571 (LAFI…FVFV).

It belongs to the MscS (TC 1.A.23) family. In terms of tissue distribution, detected in the root tip and throughout the vasculature of the root and leaf.

The protein resides in the cell membrane. Mechanosensitive channel that opens in response to stretch forces in the membrane lipid bilayer. This chain is Mechanosensitive ion channel protein 10 (MSL10), found in Arabidopsis thaliana (Mouse-ear cress).